The primary structure comprises 161 residues: Phosphopantetheine adenylyltransferase (161 aa).

Thr10 contacts substrate. Residues 10–11 and His18 each bind ATP; that span reads TF. Lys42, Met74, and Arg88 together coordinate substrate. Residues 89–91, Glu99, and 124–130 contribute to the ATP site; these read GLR and WSFISSS.

Belongs to the bacterial CoaD family. Homohexamer. The cofactor is Mg(2+).

It localises to the cytoplasm. The enzyme catalyses (R)-4'-phosphopantetheine + ATP + H(+) = 3'-dephospho-CoA + diphosphate. It participates in cofactor biosynthesis; coenzyme A biosynthesis; CoA from (R)-pantothenate: step 4/5. Reversibly transfers an adenylyl group from ATP to 4'-phosphopantetheine, yielding dephospho-CoA (dPCoA) and pyrophosphate. This is Phosphopantetheine adenylyltransferase from Serratia proteamaculans (strain 568).